The chain runs to 984 residues: Serine/threonine-protein kinase Nek9 (984 aa).

Ser2 is subject to N-acetylserine. 4 positions are modified to phosphoserine: Ser2, Ser13, Ser16, and Ser20. Residues 14–43 (INSDFGSESGGGGDSGPGPSAVPGPRAGGG) are disordered. Tyr52 carries the phosphotyrosine modification. The region spanning 52 to 308 (YIPIRVLGRG…ADALLDLPLL (257 aa)) is the Protein kinase domain. 58 to 66 (LGRGAFGEA) lines the ATP pocket. The residue at position 76 (Ser76) is a Phosphoserine. ATP is bound at residue Lys81. Residue Asp176 is the Proton acceptor of the active site. Phosphothreonine; by autocatalysis is present on Thr210. Thr254 is modified (phosphothreonine). A Phosphoserine modification is found at Ser331. The residue at position 333 (Thr333) is a Phosphothreonine. RCC1 repeat units follow at residues 388–444 (KELY…VTDE), 445–498 (GQLY…LTRN), 499–550 (KEVY…LTQS), 551–615 (GKVL…IDER), 616–668 (GRLL…ATDD), and 669–726 (NHIF…IVEK). The interval 732-896 (TIRSNSSGLS…GKALTSAACA (165 aa)) is interaction with NEK6. At Ser741 the chain carries Phosphoserine. The interval 744 to 790 (TVVQSSSPGGGIGGGGGGGGGGGGEEEDSQQESETPDPSGGFRGTME) is disordered. The segment covering 751 to 766 (PGGGIGGGGGGGGGGG) has biased composition (gly residues). Residues 767 to 778 (GEEEDSQQESET) are compositionally biased toward acidic residues. Phosphoserine occurs at positions 808 and 839. Thr891 is subject to Phosphothreonine. A coiled-coil region spans residues 896–945 (ACSALQVEVDRLQALVLKCLEEQQKLQQENLQMFTQLQKLNKKLEGGQQV). Residues 940 to 984 (EGGQQVGMHSRGTQTAKEEMEMDPKPDLDSESWCLLGTDSCRPSL) form a disordered region. Phosphoserine is present on Ser949. A compositionally biased stretch (basic and acidic residues) spans 955 to 967 (AKEEMEMDPKPDL). Ser983 bears the Phosphoserine mark.

The protein belongs to the protein kinase superfamily. NEK Ser/Thr protein kinase family. NIMA subfamily. As to quaternary structure, homodimer; homodimerization is required to activate NEK7. Binds to Ran GTPase. Has a greater affinity for Ran-GDP over Ran-GTP. Interacts with SSRP1 and SUPT16H, the 2 subunits of the FACT complex. Interacts with DYNLL1; phosphorylation at Ser-949 strongly reduces DYNLL1 binding. The cofactor is Mg(2+). Post-translationally, autophosphorylated on serine and threonine residues. When complexed with FACT, exhibits markedly elevated phosphorylation on Thr-210. During mitosis, not phosphorylated on Thr-210. Phosphorylated by CDK1 in vitro.

It localises to the cytoplasm. Its subcellular location is the nucleus. The catalysed reaction is L-seryl-[protein] + ATP = O-phospho-L-seryl-[protein] + ADP + H(+). The enzyme catalyses L-threonyl-[protein] + ATP = O-phospho-L-threonyl-[protein] + ADP + H(+). Activated during mitosis by intramolecular autophosphorylation. Activity and autophosphorylation is activated by manganese &gt;&gt; magnesium ions. It is not cell-cycle regulated but activity is higher in G0-arrested cells. Pleiotropic regulator of mitotic progression, participating in the control of spindle dynamics and chromosome separation. Phosphorylates different histones, myelin basic protein, beta-casein, and BICD2. Phosphorylates histone H3 on serine and threonine residues and beta-casein on serine residues. Important for G1/S transition and S phase progression. Phosphorylates NEK6 and NEK7 and stimulates their activity by releasing the autoinhibitory functions of Tyr-108 and Tyr-97 respectively. In Mus musculus (Mouse), this protein is Serine/threonine-protein kinase Nek9.